The sequence spans 96 residues: Co-chaperonin GroES (96 aa).

The protein belongs to the GroES chaperonin family. Heptamer of 7 subunits arranged in a ring. Interacts with the chaperonin GroEL.

The protein localises to the cytoplasm. Together with the chaperonin GroEL, plays an essential role in assisting protein folding. The GroEL-GroES system forms a nano-cage that allows encapsulation of the non-native substrate proteins and provides a physical environment optimized to promote and accelerate protein folding. GroES binds to the apical surface of the GroEL ring, thereby capping the opening of the GroEL channel. The protein is Co-chaperonin GroES of Streptococcus pyogenes serotype M18 (strain MGAS8232).